We begin with the raw amino-acid sequence, 367 residues long: Terpene cyclase verU1 (367 aa).

A helical transmembrane segment spans residues 8-28 (IRCSLLLLGLVGIYTVWISSF). Residue N50 is glycosylated (N-linked (GlcNAc...) asparagine). Helical transmembrane passes span 57–77 (FTGI…YWPV), 85–105 (LSLI…LFAL), 120–140 (MAMF…PIYC), 169–189 (CLLG…PAVV), 197–217 (IIAL…LTHL), 239–259 (ISAM…SLLA), 292–312 (FQWD…GLHI), and 327–347 (LIPE…AALY). N352 carries N-linked (GlcNAc...) asparagine glycosylation.

It belongs to the membrane-bound ascI terpene cyclase family.

It localises to the membrane. It functions in the pathway secondary metabolite biosynthesis; terpenoid biosynthesis. Its pathway is mycotoxin biosynthesis. Its function is as follows. Terpene cyclase; part of the gene cluster that mediates the biosynthesis of the neurotoxin verrucosidin, a methylated alpha-pyrone polyketide that inhibits oxidative phosphorylation in mitochondria and thereby causes neurological diseases. The carbon backbone of verrucosidin is synthesized by the HR-PKS verA, and further modified by the other verrucodidin cluster enzymes. This Penicillium polonicum protein is Terpene cyclase verU1.